Consider the following 343-residue polypeptide: Homeobox-leucine zipper protein HOX16 (343 aa).

Residues 74–133 (LPEKKRRLTPEQVHLLERSFEEENKLEPERKTELARKLGLQPRQVAVWFQNRRARWKTKQ) constitute a DNA-binding region (homeobox). Positions 132–176 (KQLERDFDRLKASFDALRADHDALLQDNHRLHSQVMSLTEKLQEK) are leucine-zipper. Positions 218–239 (FEEQQEQQVKAEDRLSTGSGGS) are disordered.

This sequence belongs to the HD-ZIP homeobox family. Class I subfamily. Expressed in seedlings, stems, leaf sheaths and blades and panicles.

It localises to the nucleus. In terms of biological role, probable transcription factor. The sequence is that of Homeobox-leucine zipper protein HOX16 (HOX16) from Oryza sativa subsp. japonica (Rice).